The chain runs to 344 residues: Nicotinate-nucleotide--dimethylbenzimidazole phosphoribosyltransferase (344 aa).

The active-site Proton acceptor is glutamate 311.

Belongs to the CobT family.

It catalyses the reaction 5,6-dimethylbenzimidazole + nicotinate beta-D-ribonucleotide = alpha-ribazole 5'-phosphate + nicotinate + H(+). It functions in the pathway nucleoside biosynthesis; alpha-ribazole biosynthesis; alpha-ribazole from 5,6-dimethylbenzimidazole: step 1/2. In terms of biological role, catalyzes the synthesis of alpha-ribazole-5'-phosphate from nicotinate mononucleotide (NAMN) and 5,6-dimethylbenzimidazole (DMB). The polypeptide is Nicotinate-nucleotide--dimethylbenzimidazole phosphoribosyltransferase (Aromatoleum aromaticum (strain DSM 19018 / LMG 30748 / EbN1) (Azoarcus sp. (strain EbN1))).